Reading from the N-terminus, the 425-residue chain is Pleckstrin homology domain-containing family A member 2 (425 aa).

In terms of domain architecture, PH 1 spans 7-113; it reads QNRICGFLDI…WVEALNQASK (107 aa). Residue lysine 141 forms a Glycyl lysine isopeptide (Lys-Gly) (interchain with G-Cter in SUMO2) linkage. A Phosphoserine modification is found at serine 184. One can recognise a PH 2 domain in the interval 198–298; sequence PLIKSGYCVK…WIEGIGAAVQ (101 aa). Over residues 310-331 the composition is skewed to polar residues; it reads SRSISLTRPGSSTLTSAPNSIL. The interval 310–425 is disordered; sequence SRSISLTRPG…DDENIRTSDV (116 aa). A phosphoserine mark is found at serine 314 and serine 349. Basic and acidic residues-rich tracts occupy residues 363–375 and 400–410; these read AEEK…HAPE and RSEPQHPKEKP.

In terms of assembly, binds MPDZ and PTPN13.

It localises to the cytoplasm. It is found in the cell membrane. Its subcellular location is the nucleus. Binds specifically to phosphatidylinositol 3,4-diphosphate (PtdIns3,4P2), but not to other phosphoinositides. May recruit other proteins to the plasma membrane. This Mus musculus (Mouse) protein is Pleckstrin homology domain-containing family A member 2 (Plekha2).